Reading from the N-terminus, the 225-residue chain is Glutathione s-transferase kappa 2 (225 aa).

Glutathione contacts are provided by residues 15 to 17 (SPY), Asn-52, and 200 to 201 (SD).

The protein belongs to the GST superfamily. Kappa family. As to expression, expressed in the pharynx, body wall muscles and epidermis. Weaker expression is seen in the intestine.

The protein localises to the mitochondrion. It catalyses the reaction RX + glutathione = an S-substituted glutathione + a halide anion + H(+). Its function is as follows. Has roles in respiratory and lipid metabolism. The sequence is that of Glutathione s-transferase kappa 2 (gstk-2) from Caenorhabditis elegans.